We begin with the raw amino-acid sequence, 60 residues long: Large ribosomal subunit protein uL30 (60 aa).

This sequence belongs to the universal ribosomal protein uL30 family. In terms of assembly, part of the 50S ribosomal subunit.

In Streptococcus thermophilus (strain CNRZ 1066), this protein is Large ribosomal subunit protein uL30.